A 951-amino-acid chain; its full sequence is 5'-3' exoribonuclease 2 (951 aa).

A CCHC-type zinc finger spans residues 262–278 (PCALCNQFGHEVKDCEG). Lys286 carries the N6-acetyllysine modification. The disordered stretch occupies residues 408 to 508 (KDDEDSFRRR…SDSEPEPEDN (101 aa)). The segment covering 416–426 (RRQKEKRKRMK) has biased composition (basic residues). Thr439 carries the post-translational modification Phosphothreonine. 2 stretches are compositionally biased toward polar residues: residues 445–458 (SRNS…SNPR) and 467–485 (QRNS…SDGS). A phosphoserine mark is found at Ser448, Ser471, Ser473, Ser475, Ser482, Ser487, Ser499, Ser501, and Ser678. 3 positions are modified to asymmetric dimethylarginine; alternate: Arg824, Arg847, and Arg851. 3 positions are modified to omega-N-methylarginine; alternate: Arg824, Arg847, and Arg851. Residue Arg880 is modified to Asymmetric dimethylarginine. An Asymmetric dimethylarginine; alternate modification is found at Arg883. Arg883 carries the omega-N-methylarginine; alternate modification. An Omega-N-methylarginine modification is found at Arg895. Positions 907–951 (NQYQMLGGPGGYPPRRDDHRGGRQGYPREGRKYPLPPPSGRYSWN) are disordered. The segment covering 920 to 938 (PRRDDHRGGRQGYPREGRK) has biased composition (basic and acidic residues). Position 947 is an asymmetric dimethylarginine; alternate (Arg947). Arg947 is subject to Omega-N-methylarginine; alternate.

Belongs to the 5'-3' exonuclease family. XRN2/RAT1 subfamily. In terms of assembly, interacts with POLR2A and SMN1/SMN2. Interacts with CDKN2AIP and NKRF. Interacts with CDKN2AIPNL; the interaction is direct. Interacts with TRIM71 (via NHL repeats) in an RNA-dependent manner. Interacts with DHX34; the interaction is RNA-independent. In terms of tissue distribution, expressed in the spleen, testis, heart, brain, lung, liver, skeletal muscle, and kidney.

It is found in the nucleus. The protein resides in the nucleolus. Possesses 5'-&gt;3' exoribonuclease activity. May promote the termination of transcription by RNA polymerase II. During transcription termination, cleavage at the polyadenylation site liberates a 5' fragment which is subsequently processed to form the mature mRNA and a 3' fragment which remains attached to the elongating polymerase. The processive degradation of this 3' fragment by this protein may promote termination of transcription. Binds to RNA polymerase II (RNAp II) transcription termination R-loops formed by G-rich pause sites. The chain is 5'-3' exoribonuclease 2 (Xrn2) from Mus musculus (Mouse).